The sequence spans 355 residues: MNQPKSAPNSTDSAQGLSYRDAGVDIDAGDALVDAIKPFAKKTMRDGVLGGIGGFGALFEVPKKYKEPVLVSGTDGVGTKLRLAFQLNKHDTVGQDLVAMSVNDILVQGAEPLFFLDYFACGKLDVGTAATVVKGIAHGCELSGCALIGGETAEMPGMYPDGEYDLAGFAVGAVEKSKIIDGSTIAPGDVVLGLASSGIHSNGFSLVRKIIERAQPDLNADFDGRSLADALMAPTHIYVKPLLALMQQIAVKGMAHITGGGLVENIPRVLREGLTAELDHRGWPLPPLFSWLQKHGGVADAEMHRVFNCGIGMAVVVSAADADAAIGLLSAAGEQVWKIGVIRESAAGEAQTVVV.

The protein belongs to the AIR synthase family.

It is found in the cytoplasm. It catalyses the reaction 2-formamido-N(1)-(5-O-phospho-beta-D-ribosyl)acetamidine + ATP = 5-amino-1-(5-phospho-beta-D-ribosyl)imidazole + ADP + phosphate + H(+). Its pathway is purine metabolism; IMP biosynthesis via de novo pathway; 5-amino-1-(5-phospho-D-ribosyl)imidazole from N(2)-formyl-N(1)-(5-phospho-D-ribosyl)glycinamide: step 2/2. The protein is Phosphoribosylformylglycinamidine cyclo-ligase of Paraburkholderia phytofirmans (strain DSM 17436 / LMG 22146 / PsJN) (Burkholderia phytofirmans).